The chain runs to 182 residues: Adenylate kinase (182 aa).

12 to 17 serves as a coordination point for ATP; the sequence is GAGKGT. Residues 32-61 are NMP; that stretch reads STGDLLREEVSGGTDLGKKAELIMNKGELV. AMP-binding positions include threonine 33, arginine 38, 59-61, 85-88, and glutamine 92; these read ELV and GFPR. The tract at residues 126–132 is LID; it reads GRGRKDD. Arginine 127 is an ATP binding site. Arginine 129 and arginine 140 together coordinate AMP. Glycine 168 is an ATP binding site.

The protein belongs to the adenylate kinase family. Monomer.

The protein resides in the cytoplasm. The catalysed reaction is AMP + ATP = 2 ADP. It functions in the pathway purine metabolism; AMP biosynthesis via salvage pathway; AMP from ADP: step 1/1. Catalyzes the reversible transfer of the terminal phosphate group between ATP and AMP. Plays an important role in cellular energy homeostasis and in adenine nucleotide metabolism. The polypeptide is Adenylate kinase (Prochlorococcus marinus (strain SARG / CCMP1375 / SS120)).